Consider the following 477-residue polypeptide: Bifunctional protein HldE (477 aa).

Positions 1 to 318 are ribokinase; the sequence is MKLSMPRFDQ…RAIQREEGSE (318 aa). Residue 194 to 197 participates in ATP binding; the sequence is NLSE. Aspartate 263 is an active-site residue. A cytidylyltransferase region spans residues 343-477; the sequence is FTNGCFDILH…EKIRKTDKAE (135 aa).

In the N-terminal section; belongs to the carbohydrate kinase PfkB family. The protein in the C-terminal section; belongs to the cytidylyltransferase family. Homodimer.

It carries out the reaction D-glycero-beta-D-manno-heptose 7-phosphate + ATP = D-glycero-beta-D-manno-heptose 1,7-bisphosphate + ADP + H(+). It catalyses the reaction D-glycero-beta-D-manno-heptose 1-phosphate + ATP + H(+) = ADP-D-glycero-beta-D-manno-heptose + diphosphate. Its pathway is nucleotide-sugar biosynthesis; ADP-L-glycero-beta-D-manno-heptose biosynthesis; ADP-L-glycero-beta-D-manno-heptose from D-glycero-beta-D-manno-heptose 7-phosphate: step 1/4. The protein operates within nucleotide-sugar biosynthesis; ADP-L-glycero-beta-D-manno-heptose biosynthesis; ADP-L-glycero-beta-D-manno-heptose from D-glycero-beta-D-manno-heptose 7-phosphate: step 3/4. In terms of biological role, catalyzes the phosphorylation of D-glycero-D-manno-heptose 7-phosphate at the C-1 position to selectively form D-glycero-beta-D-manno-heptose-1,7-bisphosphate. Functionally, catalyzes the ADP transfer from ATP to D-glycero-beta-D-manno-heptose 1-phosphate, yielding ADP-D-glycero-beta-D-manno-heptose. In Pseudomonas fluorescens (strain ATCC BAA-477 / NRRL B-23932 / Pf-5), this protein is Bifunctional protein HldE.